A 354-amino-acid chain; its full sequence is Neutral protease 2 homolog AN7962 (354 aa).

The N-terminal stretch at 1-19 (MKFIAPIALLGMFQAASAS) is a signal peptide. The propeptide occupies 20 to 178 (PVDIKTSNAG…GAQLSKLSKR (159 aa)). Cystine bridges form between Cys184–Cys255 and Cys262–Cys280. His305 provides a ligand contact to Zn(2+). Glu306 is an active-site residue. 2 residues coordinate Zn(2+): His309 and Asp320.

Belongs to the peptidase M35 family. Zn(2+) serves as cofactor.

The protein resides in the secreted. The enzyme catalyses Preferential cleavage of bonds with hydrophobic residues in P1'. Also 3-Asn-|-Gln-4 and 8-Gly-|-Ser-9 bonds in insulin B chain.. In terms of biological role, secreted metalloproteinase that allows assimilation of proteinaceous substrates. Shows high activities on basic nuclear substrates such as histone and protamine. The sequence is that of Neutral protease 2 homolog AN7962 from Emericella nidulans (strain FGSC A4 / ATCC 38163 / CBS 112.46 / NRRL 194 / M139) (Aspergillus nidulans).